A 313-amino-acid polypeptide reads, in one-letter code: Ribosomal RNA small subunit methyltransferase H (313 aa).

S-adenosyl-L-methionine-binding positions include 35-37 (GGH), aspartate 55, phenylalanine 79, aspartate 101, and glutamine 108.

The protein belongs to the methyltransferase superfamily. RsmH family.

The protein localises to the cytoplasm. It carries out the reaction cytidine(1402) in 16S rRNA + S-adenosyl-L-methionine = N(4)-methylcytidine(1402) in 16S rRNA + S-adenosyl-L-homocysteine + H(+). Functionally, specifically methylates the N4 position of cytidine in position 1402 (C1402) of 16S rRNA. The chain is Ribosomal RNA small subunit methyltransferase H from Musicola paradisiaca (strain Ech703) (Dickeya paradisiaca).